A 1096-amino-acid polypeptide reads, in one-letter code: DNA-directed RNA polymerase subunit beta (1096 aa).

A disordered region spans residues 1069-1096 (DLMQDVNPRRSTPSRPTYESLGSDYQED).

It belongs to the RNA polymerase beta chain family. As to quaternary structure, in cyanobacteria the RNAP catalytic core is composed of 2 alpha, 1 beta, 1 beta', 1 gamma and 1 omega subunit. When a sigma factor is associated with the core the holoenzyme is formed, which can initiate transcription.

It carries out the reaction RNA(n) + a ribonucleoside 5'-triphosphate = RNA(n+1) + diphosphate. Functionally, DNA-dependent RNA polymerase catalyzes the transcription of DNA into RNA using the four ribonucleoside triphosphates as substrates. The polypeptide is DNA-directed RNA polymerase subunit beta (Prochlorococcus marinus (strain SARG / CCMP1375 / SS120)).